Consider the following 234-residue polypeptide: MHHHWHRSFILHRRSYSETSLILDLLTENEGRISLIAKGALRPRSALKGYLQPFTPLLLRWSGKSAIKTLCGAEPISIAVPLTGIFLYSGLYVNELLSRLLLPNIDYRALFFDYLDCLEALASAQDTSERALRRFELALLTHLGYGVDFLHCVETGEPVVAQMTYRYQHEIGFIRSPEDDSLGFTGHQLQSLAKGAFYDQETLKAAKRFTRIALKPHLGHRPLNSRSLFRKFNL.

It belongs to the RecO family.

Functionally, involved in DNA repair and RecF pathway recombination. This chain is DNA repair protein RecO, found in Hamiltonella defensa subsp. Acyrthosiphon pisum (strain 5AT).